The following is a 68-amino-acid chain: Large ribosomal subunit protein bL33c (68 aa).

It belongs to the bacterial ribosomal protein bL33 family.

It is found in the plastid. It localises to the chloroplast. This chain is Large ribosomal subunit protein bL33c, found in Pinus koraiensis (Korean pine).